The sequence spans 88 residues: FXYD domain-containing ion transport regulator 4 (88 aa).

The signal sequence occupies residues 1–20; the sequence is MEEITCAFLLLLAGLPALEA. Topologically, residues 21–38 are extracellular; sequence SDPVDKDSPFYYDWESLQ. A helical transmembrane segment spans residues 39-59; the sequence is LGGLIFGGLLCIAGIAMALSG. At 60-88 the chain is on the cytoplasmic side; the sequence is KCKCRRTHKPSSLPGKATPLIIPGSANTC.

This sequence belongs to the FXYD family. Regulatory subunit of the sodium/potassium-transporting ATPase which is composed of a catalytic alpha subunit, a non-catalytic beta subunit and a regulatory subunit. The regulatory subunit, a member of the FXYD protein family, modulates the enzymatic activity in a tissue- and isoform-specific way by changing affinities of the Na+/K+-ATPase toward Na(+), K(+) or ATP.

The protein resides in the cell membrane. Its subcellular location is the basolateral cell membrane. Functionally, associates with and regulates the activity of the sodium/potassium-transporting ATPase (NKA) which catalyzes the hydrolysis of ATP coupled with the exchange of Na(+) and K(+) ions across the plasma membrane. Increases the apparent affinity of the transporter for Na(+) and increases NKA activity. This chain is FXYD domain-containing ion transport regulator 4 (Fxyd4), found in Mus musculus (Mouse).